The sequence spans 276 residues: Undecaprenyl-diphosphatase 2 (276 aa).

8 consecutive transmembrane segments (helical) span residues 4–24 (IEAL…VSSL), 44–64 (DFLP…LIYF), 87–107 (ARLM…GLLL), 114–134 (LFAS…LLLW), 150–170 (LSFA…LPGF), 193–213 (FSFL…IPKL), 225–245 (LLLA…WFLM), and 256–276 (LRPF…FKLV).

The protein belongs to the UppP family.

Its subcellular location is the cell inner membrane. The catalysed reaction is di-trans,octa-cis-undecaprenyl diphosphate + H2O = di-trans,octa-cis-undecaprenyl phosphate + phosphate + H(+). In terms of biological role, catalyzes the dephosphorylation of undecaprenyl diphosphate (UPP). Confers resistance to bacitracin. This Chromobacterium violaceum (strain ATCC 12472 / DSM 30191 / JCM 1249 / CCUG 213 / NBRC 12614 / NCIMB 9131 / NCTC 9757 / MK) protein is Undecaprenyl-diphosphatase 2.